Here is a 121-residue protein sequence, read N- to C-terminus: MVHMHITAWALGLILFFVAYSLYSAGRKGKGVHMGLRLMYIIIIVTGFMLYMGIMKTATSNMHMWYGLKMVAGILVIGGMEMVLVKMSKNKATGAVWGLFIVALVAVFYLGLKLPIGWQVF.

Transmembrane regions (helical) follow at residues 6–26 (ITAW…YSAG), 38–58 (LMYI…MKTA), 65–85 (WYGL…MVLV), and 92–112 (ATGA…YLGL).

It belongs to the UPF0344 family.

Its subcellular location is the cell membrane. This chain is UPF0344 protein BCA_1194, found in Bacillus cereus (strain 03BB102).